Here is a 270-residue protein sequence, read N- to C-terminus: Glutamate racemase (270 aa).

Residues 13 to 14 (DS) and 45 to 46 (YG) each bind substrate. Residue cysteine 77 is the Proton donor/acceptor of the active site. Residue 78–79 (NT) participates in substrate binding. The Proton donor/acceptor role is filled by cysteine 185. 186–187 (TH) provides a ligand contact to substrate.

Belongs to the aspartate/glutamate racemases family.

The enzyme catalyses L-glutamate = D-glutamate. It functions in the pathway cell wall biogenesis; peptidoglycan biosynthesis. Functionally, provides the (R)-glutamate required for cell wall biosynthesis. The chain is Glutamate racemase from Vibrio parahaemolyticus serotype O3:K6 (strain RIMD 2210633).